The primary structure comprises 284 residues: Hypersensitive-induced response protein 1 (284 aa).

The N-myristoyl glycine moiety is linked to residue Gly-2.

In terms of assembly, interacts with LRR1.

Its subcellular location is the cell membrane. Positive regulator of hypersensitive response (HR)-like cell death. May be involved in potassium ion channel regulation. In Oryza sativa subsp. japonica (Rice), this protein is Hypersensitive-induced response protein 1.